Here is a 303-residue protein sequence, read N- to C-terminus: Ornithine carbamoyltransferase (303 aa).

Residues 52–55, Gln79, Arg103, and 130–133 contribute to the carbamoyl phosphate site; these read STRT and HPCQ. Residues Asn161, Asp222, and 226-227 each bind L-ornithine; that span reads SM. Carbamoyl phosphate contacts are provided by residues 262–263 and Arg290; that span reads CL.

It belongs to the aspartate/ornithine carbamoyltransferase superfamily. OTCase family.

Its subcellular location is the cytoplasm. The catalysed reaction is carbamoyl phosphate + L-ornithine = L-citrulline + phosphate + H(+). Its pathway is amino-acid biosynthesis; L-arginine biosynthesis; L-arginine from L-ornithine and carbamoyl phosphate: step 1/3. Functionally, reversibly catalyzes the transfer of the carbamoyl group from carbamoyl phosphate (CP) to the N(epsilon) atom of ornithine (ORN) to produce L-citrulline. The sequence is that of Ornithine carbamoyltransferase from Geobacter sulfurreducens (strain ATCC 51573 / DSM 12127 / PCA).